The primary structure comprises 405 residues: L-carnitine CoA-transferase (405 aa).

Lys97 and Arg104 together coordinate CoA. Catalysis depends on Asp169, which acts as the Nucleophile.

Belongs to the CoA-transferase III family. CaiB subfamily. In terms of assembly, homodimer.

The protein resides in the cytoplasm. The catalysed reaction is crotonobetainyl-CoA + (R)-carnitine = crotonobetaine + (R)-carnitinyl-CoA. The enzyme catalyses 4-(trimethylamino)butanoyl-CoA + (R)-carnitine = (R)-carnitinyl-CoA + 4-(trimethylamino)butanoate. It functions in the pathway amine and polyamine metabolism; carnitine metabolism. In terms of biological role, catalyzes the reversible transfer of the CoA moiety from gamma-butyrobetainyl-CoA to L-carnitine to generate L-carnitinyl-CoA and gamma-butyrobetaine. Is also able to catalyze the reversible transfer of the CoA moiety from gamma-butyrobetainyl-CoA or L-carnitinyl-CoA to crotonobetaine to generate crotonobetainyl-CoA. The protein is L-carnitine CoA-transferase of Escherichia coli (strain SE11).